A 288-amino-acid chain; its full sequence is Nucleotide-binding protein AHA_3920 (288 aa).

ATP is bound at residue 8–15 (GRSGSGKT). Residue 56-59 (DVRN) coordinates GTP.

It belongs to the RapZ-like family.

Displays ATPase and GTPase activities. This chain is Nucleotide-binding protein AHA_3920, found in Aeromonas hydrophila subsp. hydrophila (strain ATCC 7966 / DSM 30187 / BCRC 13018 / CCUG 14551 / JCM 1027 / KCTC 2358 / NCIMB 9240 / NCTC 8049).